Here is a 359-residue protein sequence, read N- to C-terminus: ATPase ASNA1 homolog (359 aa).

23–30 (KGGVGKTT) lines the ATP pocket. Residue D63 is part of the active site. E252 and N279 together coordinate ATP. The Zn(2+) site is built by C291 and C294.

This sequence belongs to the arsA ATPase family. Homodimer.

The protein localises to the cytoplasm. It localises to the endoplasmic reticulum. In terms of biological role, ATPase required for the post-translational delivery of tail-anchored (TA) proteins to the endoplasmic reticulum. Recognizes and selectively binds the transmembrane domain of TA proteins in the cytosol. This complex then targets to the endoplasmic reticulum by membrane-bound receptors, where the tail-anchored protein is released for insertion. This process is regulated by ATP binding and hydrolysis. ATP binding drives the homodimer towards the closed dimer state, facilitating recognition of newly synthesized TA membrane proteins. ATP hydrolysis is required for insertion. Subsequently, the homodimer reverts towards the open dimer state, lowering its affinity for the membrane-bound receptor, and returning it to the cytosol to initiate a new round of targeting. In Trypanosoma cruzi (strain CL Brener), this protein is ATPase ASNA1 homolog.